The sequence spans 288 residues: 4-diphosphocytidyl-2-C-methyl-D-erythritol kinase (288 aa).

Residue lysine 8 is part of the active site. ATP is bound at residue 90–100 (PVGAGLAGGSS). Residue aspartate 132 is part of the active site.

It belongs to the GHMP kinase family. IspE subfamily.

It carries out the reaction 4-CDP-2-C-methyl-D-erythritol + ATP = 4-CDP-2-C-methyl-D-erythritol 2-phosphate + ADP + H(+). The protein operates within isoprenoid biosynthesis; isopentenyl diphosphate biosynthesis via DXP pathway; isopentenyl diphosphate from 1-deoxy-D-xylulose 5-phosphate: step 3/6. In terms of biological role, catalyzes the phosphorylation of the position 2 hydroxy group of 4-diphosphocytidyl-2C-methyl-D-erythritol. This chain is 4-diphosphocytidyl-2-C-methyl-D-erythritol kinase, found in Chlamydia trachomatis serovar D (strain ATCC VR-885 / DSM 19411 / UW-3/Cx).